A 439-amino-acid chain; its full sequence is tRNA modification GTPase MnmE (439 aa).

(6S)-5-formyl-5,6,7,8-tetrahydrofolate is bound by residues Arg20, Glu78, and Lys116. The TrmE-type G domain maps to 211–364 (GIYVAILGEP…LLSAIQKKVE (154 aa)). GTP contacts are provided by residues 221-226 (NSGKST), 240-246 (SEYAGTT), and 265-268 (DTAG). Mg(2+)-binding residues include Ser225 and Thr246. Lys439 serves as a coordination point for (6S)-5-formyl-5,6,7,8-tetrahydrofolate.

Belongs to the TRAFAC class TrmE-Era-EngA-EngB-Septin-like GTPase superfamily. TrmE GTPase family. Homodimer. Heterotetramer of two MnmE and two MnmG subunits. It depends on K(+) as a cofactor.

It is found in the cytoplasm. Functionally, exhibits a very high intrinsic GTPase hydrolysis rate. Involved in the addition of a carboxymethylaminomethyl (cmnm) group at the wobble position (U34) of certain tRNAs, forming tRNA-cmnm(5)s(2)U34. In Ehrlichia ruminantium (strain Welgevonden), this protein is tRNA modification GTPase MnmE.